A 559-amino-acid chain; its full sequence is Glutamine--tRNA ligase (559 aa).

The short motif at 44–54 (PEPNGYLHIGH) is the 'HIGH' region element. ATP is bound by residues 45–47 (EPN) and 51–57 (HIGHAKS). L-glutamine is bound by residues aspartate 77 and tyrosine 222. ATP-binding positions include threonine 241 and 272-273 (RL). The 'KMSKS' region motif lies at 279–283 (LTSKR).

This sequence belongs to the class-I aminoacyl-tRNA synthetase family. In terms of assembly, monomer.

Its subcellular location is the cytoplasm. The catalysed reaction is tRNA(Gln) + L-glutamine + ATP = L-glutaminyl-tRNA(Gln) + AMP + diphosphate. The chain is Glutamine--tRNA ligase from Pasteurella multocida (strain Pm70).